The primary structure comprises 182 residues: Isopentenyl-diphosphate Delta-isomerase (182 aa).

Mn(2+)-binding residues include His-23 and His-30. The 135-residue stretch at Pro-28–Glu-162 folds into the Nudix hydrolase domain. The active site involves Cys-65. Cys-65 contributes to the Mg(2+) binding site. His-67 contacts Mn(2+). Residue Glu-85 coordinates Mg(2+). Mn(2+) contacts are provided by Glu-112 and Glu-114. Glu-114 is a catalytic residue.

Belongs to the IPP isomerase type 1 family. The cofactor is Mg(2+). It depends on Mn(2+) as a cofactor.

The protein localises to the cytoplasm. The catalysed reaction is isopentenyl diphosphate = dimethylallyl diphosphate. It participates in isoprenoid biosynthesis; dimethylallyl diphosphate biosynthesis; dimethylallyl diphosphate from isopentenyl diphosphate: step 1/1. Its function is as follows. Catalyzes the 1,3-allylic rearrangement of the homoallylic substrate isopentenyl (IPP) to its highly electrophilic allylic isomer, dimethylallyl diphosphate (DMAPP). The polypeptide is Isopentenyl-diphosphate Delta-isomerase (Brevibacterium linens).